Here is a 160-residue protein sequence, read N- to C-terminus: Cytochrome b6-f complex subunit 4 (160 aa).

The next 3 membrane-spanning stretches (helical) occupy residues 36–56, 95–115, and 128–148; these read LLYIFPVVILGTIACIVGLSV, LLGIALQTLVPLGLMLIPFIE, and IAMAVFLFGTATTIYLGIGAA.

The protein belongs to the cytochrome b family. PetD subfamily. The 4 large subunits of the cytochrome b6-f complex are cytochrome b6, subunit IV (17 kDa polypeptide, PetD), cytochrome f and the Rieske protein, while the 4 small subunits are PetG, PetL, PetM and PetN. The complex functions as a dimer.

It is found in the cellular thylakoid membrane. Component of the cytochrome b6-f complex, which mediates electron transfer between photosystem II (PSII) and photosystem I (PSI), cyclic electron flow around PSI, and state transitions. In Synechococcus sp. (strain CC9311), this protein is Cytochrome b6-f complex subunit 4.